The chain runs to 183 residues: Peptidyl-prolyl cis-trans isomerase H (183 aa).

The PPIase cyclophilin-type domain maps to 19 to 182 (FFDVALGGEP…QDVVIIQCGE (164 aa)).

It belongs to the cyclophilin-type PPIase family. PPIase H subfamily.

It localises to the nucleus. It catalyses the reaction [protein]-peptidylproline (omega=180) = [protein]-peptidylproline (omega=0). Its function is as follows. PPIases accelerate the folding of proteins. It catalyzes the cis-trans isomerization of proline imidic peptide bonds in oligopeptides. The sequence is that of Peptidyl-prolyl cis-trans isomerase H (cyp3) from Emericella nidulans (strain FGSC A4 / ATCC 38163 / CBS 112.46 / NRRL 194 / M139) (Aspergillus nidulans).